Here is a 243-residue protein sequence, read N- to C-terminus: Large ribosomal subunit protein uL2 (243 aa).

2 disordered regions span residues 1–23 (MGKR…PSHR) and 204–243 (PFGG…GGRR). The segment covering 228 to 243 (KVGHIAARKTGRGGRR) has biased composition (basic residues).

Belongs to the universal ribosomal protein uL2 family. In terms of assembly, part of the 50S ribosomal subunit. Forms a bridge to the 30S subunit in the 70S ribosome.

Its function is as follows. One of the primary rRNA binding proteins. Required for association of the 30S and 50S subunits to form the 70S ribosome, for tRNA binding and peptide bond formation. It has been suggested to have peptidyltransferase activity; this is somewhat controversial. Makes several contacts with the 16S rRNA in the 70S ribosome. This chain is Large ribosomal subunit protein uL2, found in Methanopyrus kandleri (strain AV19 / DSM 6324 / JCM 9639 / NBRC 100938).